A 353-amino-acid chain; its full sequence is Nif-specific regulatory protein (353 aa).

The region spanning 12 to 240 (IVGESAALKE…LQNCTQRTAT (229 aa)) is the Sigma-54 factor interaction domain. ATP contacts are provided by residues 40–47 (GESGTGKE) and 103–112 (AHGGTLLLDE). Positions 325–344 (QAKAARLLGRTPRQVGYSLR) form a DNA-binding region, H-T-H motif.

As to quaternary structure, interacts with sigma-54.

In terms of biological role, required for activation of most nif operons, which are directly involved in nitrogen fixation. The chain is Nif-specific regulatory protein (nifA) from Rhizobium leguminosarum bv. trifolii.